Consider the following 304-residue polypeptide: MTVPVITGPTASGKSALAHRLALETGAEILSADSRQVYRELTIGSAKPSREMLREVAYHFINERAITEPFSAGAFALEATARIREIKRRGKRVIVAGGSALYLEGLISPFAELPPQNAEIRRKLSEQLADLGGELLYERLKQLDPEQAETLDPTKTHRLLRSLEIIEITGRTVTELQAKKSGEPSPPSSLHFKTFAIDIPREELYRQINRRTESMMEEGLLIEAEQLWKRYRIEIENKSLPALLTVGYQELFDHFRGRTTLDEAVTLIQQHTRNYAKRQLTFMRNRLTVQWMPADTDWTAHFTG.

Position 8–15 (8–15 (GPTASGKS)) interacts with ATP. A substrate-binding site is contributed by 10 to 15 (TASGKS). An interaction with substrate tRNA region spans residues 33–36 (DSRQ).

This sequence belongs to the IPP transferase family. In terms of assembly, monomer. It depends on Mg(2+) as a cofactor.

The enzyme catalyses adenosine(37) in tRNA + dimethylallyl diphosphate = N(6)-dimethylallyladenosine(37) in tRNA + diphosphate. Functionally, catalyzes the transfer of a dimethylallyl group onto the adenine at position 37 in tRNAs that read codons beginning with uridine, leading to the formation of N6-(dimethylallyl)adenosine (i(6)A). In Chlorobium luteolum (strain DSM 273 / BCRC 81028 / 2530) (Pelodictyon luteolum), this protein is tRNA dimethylallyltransferase.